A 377-amino-acid polypeptide reads, in one-letter code: D-alanine--D-alanine ligase (377 aa).

The 210-residue stretch at 140-349 (KELLTVNNIR…NVELVDKLID (210 aa)) folds into the ATP-grasp domain. 170 to 225 (VKDLGDVVFVKAANQGSSVGVSRAKTADEFEAALTDSFQYDYKVLIEAAVKGPREL) provides a ligand contact to ATP. Positions 303, 316, and 318 each coordinate Mg(2+).

This sequence belongs to the D-alanine--D-alanine ligase family. It depends on Mg(2+) as a cofactor. Mn(2+) is required as a cofactor.

The protein resides in the cytoplasm. It carries out the reaction 2 D-alanine + ATP = D-alanyl-D-alanine + ADP + phosphate + H(+). Its pathway is cell wall biogenesis; peptidoglycan biosynthesis. In terms of biological role, cell wall formation. This is D-alanine--D-alanine ligase from Leuconostoc citreum (strain KM20).